The following is a 105-amino-acid chain: MMGGNMNKMMKQVQKMQQDMAKMQEELGNRTVETTAGGGVVKVVASGKQEIISITIKPEAVDPDDVEMLQDLLITAVNDALRQSQEMVAKEMGKLTGGLNIPGLF.

Belongs to the YbaB/EbfC family. Homodimer.

The protein resides in the cytoplasm. The protein localises to the nucleoid. Binds to DNA and alters its conformation. May be involved in regulation of gene expression, nucleoid organization and DNA protection. This is Nucleoid-associated protein Dred_0043 from Desulforamulus reducens (strain ATCC BAA-1160 / DSM 100696 / MI-1) (Desulfotomaculum reducens).